Reading from the N-terminus, the 547-residue chain is Chaperonin GroEL (547 aa).

ATP-binding positions include Thr30–Pro33, Lys51, Asp87–Thr91, Gly415, Asn479–Ala481, and Asp495. The tract at residues Pro525–Met547 is disordered. Residues Ala532–Met547 show a composition bias toward gly residues.

It belongs to the chaperonin (HSP60) family. Forms a cylinder of 14 subunits composed of two heptameric rings stacked back-to-back. Interacts with the co-chaperonin GroES.

Its subcellular location is the cytoplasm. The catalysed reaction is ATP + H2O + a folded polypeptide = ADP + phosphate + an unfolded polypeptide.. Functionally, together with its co-chaperonin GroES, plays an essential role in assisting protein folding. The GroEL-GroES system forms a nano-cage that allows encapsulation of the non-native substrate proteins and provides a physical environment optimized to promote and accelerate protein folding. This is Chaperonin GroEL from Nitrosomonas eutropha (strain DSM 101675 / C91 / Nm57).